The sequence spans 2472 residues: Telomere-associated protein RIF1 (2472 aa).

Residues 1 to 25 form a disordered region; the sequence is MTARGQSPLAPLLETLEDPSASHGG. Residue Ser402 is modified to Phosphoserine. Thr409 bears the Phosphothreonine mark. Ser782, Ser979, and Ser1008 each carry phosphoserine. Thr1047 is modified (phosphothreonine). The tract at residues 1145 to 1192 is disordered; it reads LEKSSLSNNECGSLDKTSPEMSNSNNDERKKALISSRKTSTECASSTE. Positions 1148-1169 are enriched in polar residues; it reads SSLSNNECGSLDKTSPEMSNSN. At Ser1162 the chain carries Phosphoserine. The residue at position 1220 (Thr1220) is a Phosphothreonine. 2 positions are modified to phosphoserine: Ser1236 and Ser1238. 2 stretches are compositionally biased toward basic and acidic residues: residues 1265 to 1279 and 1306 to 1315; these read AKQR…DSEK and MRSEPEKNTE. Disordered stretches follow at residues 1265 to 1318, 1398 to 1464, and 1479 to 1587; these read AKQR…EESV, MVNE…DVLP, and IEKG…DQEE. Residues 1400 to 1412 are compositionally biased toward polar residues; sequence NEDSQVQITPNQK. Phosphoserine occurs at positions 1422, 1454, and 1513. Composition is skewed to basic and acidic residues over residues 1431 to 1464 and 1500 to 1530; these read SQDK…DVLP and EQNK…EKLV. Residue Thr1518 is modified to Phosphothreonine. Residues Ser1542, Ser1552, Ser1554, Ser1556, and Ser1564 each carry the phosphoserine modification. Residues 1565-1574 show a composition bias toward basic residues; it reads RKKRSGKWKN. Residues Ser1576, Ser1579, Ser1613, Ser1616, Ser1688, Ser1693, Ser1706, and Ser1709 each carry the phosphoserine modification. Residues 1762 to 1782 are disordered; sequence TKKADVQAPVSPSETSQANPY. Residues 1771 to 1782 are compositionally biased toward polar residues; it reads VSPSETSQANPY. Thr1806 carries the post-translational modification Phosphothreonine. A Phosphoserine modification is found at Ser1810. The span at 1846–1859 shows a compositional bias: polar residues; that stretch reads AMSLESQESPNENF. The segment at 1846–1889 is disordered; the sequence is AMSLESQESPNENFKTVGPCLGDSKNVSQESLETKEEKPEETPK. Phosphoserine occurs at positions 1873 and 1876. The span at 1877–1889 shows a compositional bias: basic and acidic residues; it reads LETKEEKPEETPK. The interval 1924–2472 is interaction with condensed chromosomes in telophase; sequence EASFHGQERT…WRSPSHENSI (549 aa). Phosphoserine occurs at positions 1926 and 1971. Residues 1992 to 2021 are disordered; that stretch reads EQTAAGELDGGNDVSDLHSSEETNTKMKNN. Residues 2006 to 2021 are compositionally biased toward basic and acidic residues; sequence SDLHSSEETNTKMKNN. Phosphoserine is present on residues Ser2144 and Ser2161. Thr2167 carries the phosphothreonine modification. An interaction with ERCC6 region spans residues 2170–2446; it reads VWSPLASPST…SGSQLFEMHE (277 aa). Phosphoserine is present on residues Ser2172, Ser2176, Ser2195, Ser2196, and Ser2205. The span at 2227–2255 shows a compositional bias: polar residues; that stretch reads RSHSSNSSPIGKSVKTSPTTQSKHNTTSA. The disordered stretch occupies residues 2227-2269; it reads RSHSSNSSPIGKSVKTSPTTQSKHNTTSAKGFLSPGSRSPKFK. A phosphoserine mark is found at Ser2260, Ser2339, Ser2391, Ser2393, Ser2465, and Ser2471.

The protein belongs to the RIF1 family. Interacts with TP53BP1 (when phosphorylated by ATM). May interact with TRF2. Interacts with SHLD2. Interacts with ERCC6 (via WHD region). Interacts with ASTE1. Highly expressed in testis.

It localises to the nucleus. The protein localises to the chromosome. Its subcellular location is the telomere. The protein resides in the cytoplasm. It is found in the cytoskeleton. It localises to the spindle. Functionally, key regulator of TP53BP1 that plays a key role in the repair of double-strand DNA breaks (DSBs) in response to DNA damage: acts by promoting non-homologous end joining (NHEJ)-mediated repair of DSBs. In response to DNA damage, interacts with ATM-phosphorylated TP53BP1. Interaction with TP53BP1 leads to dissociate the interaction between NUDT16L1/TIRR and TP53BP1, thereby unmasking the tandem Tudor-like domain of TP53BP1 and allowing recruitment to DNA DSBs. Once recruited to DSBs, RIF1 and TP53BP1 act by promoting NHEJ-mediated repair of DSBs. In the same time, RIF1 and TP53BP1 specifically counteract the function of BRCA1 by blocking DSBs resection via homologous recombination (HR) during G1 phase. Also required for immunoglobulin class-switch recombination (CSR) during antibody genesis, a process that involves the generation of DNA DSBs. Promotes NHEJ of dysfunctional telomeres. The chain is Telomere-associated protein RIF1 from Homo sapiens (Human).